The primary structure comprises 384 residues: Putative sarcosine oxidase (384 aa).

6–36 (DVVVVGAGIFGSCTAYNCQKIGLKTLLLEQF) lines the FAD pocket. S-8alpha-FAD cysteine is present on Cys-315.

The protein belongs to the MSOX/MTOX family. The cofactor is FAD.

The catalysed reaction is sarcosine + O2 + H2O = formaldehyde + glycine + H2O2. The polypeptide is Putative sarcosine oxidase (Caenorhabditis elegans).